The chain runs to 124 residues: Small polypeptide ROTUNDIFOLIA LIKE 3 (124 aa).

Positions 1–25 are disordered; sequence MEDERWKLSSSKGRSKSGRSCSSSS. 2 N-linked (GlcNAc...) asparagine glycosylation sites follow: Asn-35 and Asn-38. The chain crosses the membrane as a helical span at residues 59 to 75; the sequence is AWSAAGAGGGGASSSSS. The segment at 60-95 is disordered; that stretch reads WSAAGAGGGGASSSSSSQHQHQQQQQQSNNSQRLSK. The span at 71-91 shows a compositional bias: low complexity; the sequence is SSSSSSQHQHQQQQQQSNNSQ. A glycan (N-linked (GlcNAc...) asparagine) is linked at Asn-88. Residues 92-124 form a required for DVL/RTFL small polypeptide activity region; the sequence is RLSKKCVEAVKEHRARFYIVRRCVSMLVCWRDY.

The protein belongs to the DVL/RTFL small polypeptides family.

The protein resides in the cell membrane. In terms of biological role, small polypeptide acting as a regulatory molecule which coordinates cellular responses required for differentiation, growth and development, probably by restricting polar cell proliferation in lateral organs (e.g. leaves and petioles). This Oryza sativa subsp. indica (Rice) protein is Small polypeptide ROTUNDIFOLIA LIKE 3.